Reading from the N-terminus, the 802-residue chain is MANTKKTTLDITGMTCAACSNRIEKKLNKLDDVNAQVNLTTEKATVEYNPDQHDVQEFINTIQHLGYGVTVETVELDITGMTCAACSSRIEKVLNKMNGVQNATVNLTTEQAKVDYYPEETDADKLVTRIQKLGYDASIKDNNKDQTSRKAEALQHKLIKLIISAVLSLPLLMLMFVHLFNMHIPALFTNPWFQFILATPVQFIIGWQFYVGAYKNLRNGGANMDVLVAVGTSAAYFYSIYEMVRWLNGSTTQPHLYFETSAVLLTLILFGKYLEARAKSQTTNALGELLSLQAKEARILKDGNEVMIPLNEVHVGDTLIVKPGEKIPVDGKIIKGMTAIDESMLTGESIPVEKNVDDTVIGSTMNKNGTITMTATKVGGDTALANIIKVVEEAQSSKAPIQRLADIISGYFVPIVVGIALLIFIVWITLVTPGTFEPALVASISVLVIACPCALGLATPTSIMVGTGRAAENGILFKGGEFVERTHQIDTIVLDKTGTITNGRPVVTDYHGDNQTLQLLATAEKDSEHPLAEAIVNYAKEKQLTLTETTTFKAVPGHGIEATIDHHHILVGNRKLMADNDISLPKHISDDLTHYERDGKTAMLIAVNYSLTGIIAVADTVKDHAKDAIKQLHDMGIEVAMLTGDNKNTAQAIAKQVGIDTVIADILPEEKAAQIAKLQQQGKKVAMVGDGVNDAPALVKADIGIAIGTGTEVAIEAADITILGGDLMLIPKAIYASKATIRNIRQNLFWAFGYNIAGIPIAALGLLAPWVAGAAMALSSVSVVTNALRLKKMRLEPRRKDA.

HMA domains are found at residues 5–70 (KKTT…YGVT) and 72–138 (ETVE…YDAS). Cys-16, Cys-19, Cys-83, and Cys-86 together coordinate Cu(+). 6 consecutive transmembrane segments (helical) span residues 161–181 (LIIS…HLFN), 192–212 (WFQF…FYVG), 224–244 (MDVL…YEMV), 256–276 (LYFE…YLEA), 411–431 (YFVP…ITLV), and 438–458 (PALV…LGLA). Asp-495 serves as the catalytic 4-aspartylphosphate intermediate. Residues Asp-690 and Asp-694 each contribute to the Mg(2+) site. 2 helical membrane passes run 748–767 (LFWA…LGLL) and 771–790 (VAGA…ALRL).

It belongs to the cation transport ATPase (P-type) (TC 3.A.3) family. Type IB subfamily.

The protein resides in the cell membrane. The catalysed reaction is Cu(+)(in) + ATP + H2O = Cu(+)(out) + ADP + phosphate + H(+). Functionally, involved in copper export. This chain is Copper-exporting P-type ATPase (copA), found in Staphylococcus aureus (strain N315).